The following is a 107-amino-acid chain: Nucleoid-associated protein NE0434 (107 aa).

It belongs to the YbaB/EbfC family. In terms of assembly, homodimer.

Its subcellular location is the cytoplasm. It is found in the nucleoid. Functionally, binds to DNA and alters its conformation. May be involved in regulation of gene expression, nucleoid organization and DNA protection. The chain is Nucleoid-associated protein NE0434 from Nitrosomonas europaea (strain ATCC 19718 / CIP 103999 / KCTC 2705 / NBRC 14298).